The primary structure comprises 353 residues: Photosystem II protein D1 (353 aa).

T2 is subject to N-acetylthreonine. The residue at position 2 (T2) is a Phosphothreonine. The next 3 helical transmembrane spans lie at 29–46 (YIGW…TATS), 118–133 (HFLL…EWEL), and 142–156 (WIAV…AAAA). Position 118 (H118) interacts with chlorophyll a. Residue Y126 participates in pheophytin a binding. Residues D170 and E189 each coordinate [CaMn4O5] cluster. A helical transmembrane segment spans residues 197-218 (FHMLGVAGVFGGSLFSAMHGSL). A chlorophyll a-binding site is contributed by H198. A quinone-binding positions include H215 and 264–265 (SF). A Fe cation-binding site is contributed by H215. H272 contacts Fe cation. The helical transmembrane segment at 274-288 (FLAAWPVVGIWFTAL) threads the bilayer. [CaMn4O5] cluster-binding residues include H332, E333, D342, and A344. Residues 345–353 (AVEAPSTNG) constitute a propeptide that is removed on maturation.

This sequence belongs to the reaction center PufL/M/PsbA/D family. In terms of assembly, PSII is composed of 1 copy each of membrane proteins PsbA, PsbB, PsbC, PsbD, PsbE, PsbF, PsbH, PsbI, PsbJ, PsbK, PsbL, PsbM, PsbT, PsbX, PsbY, PsbZ, Psb30/Ycf12, at least 3 peripheral proteins of the oxygen-evolving complex and a large number of cofactors. It forms dimeric complexes. It depends on The D1/D2 heterodimer binds P680, chlorophylls that are the primary electron donor of PSII, and subsequent electron acceptors. It shares a non-heme iron and each subunit binds pheophytin, quinone, additional chlorophylls, carotenoids and lipids. D1 provides most of the ligands for the Mn4-Ca-O5 cluster of the oxygen-evolving complex (OEC). There is also a Cl(-1) ion associated with D1 and D2, which is required for oxygen evolution. The PSII complex binds additional chlorophylls, carotenoids and specific lipids. as a cofactor. Post-translationally, tyr-161 forms a radical intermediate that is referred to as redox-active TyrZ, YZ or Y-Z. C-terminally processed by CTPA; processing is essential to allow assembly of the oxygen-evolving complex and thus photosynthetic growth.

Its subcellular location is the plastid. The protein localises to the chloroplast thylakoid membrane. The catalysed reaction is 2 a plastoquinone + 4 hnu + 2 H2O = 2 a plastoquinol + O2. In terms of biological role, photosystem II (PSII) is a light-driven water:plastoquinone oxidoreductase that uses light energy to abstract electrons from H(2)O, generating O(2) and a proton gradient subsequently used for ATP formation. It consists of a core antenna complex that captures photons, and an electron transfer chain that converts photonic excitation into a charge separation. The D1/D2 (PsbA/PsbD) reaction center heterodimer binds P680, the primary electron donor of PSII as well as several subsequent electron acceptors. The protein is Photosystem II protein D1 of Panax ginseng (Korean ginseng).